The sequence spans 189 residues: Large ribosomal subunit protein uL5 (189 aa).

The protein belongs to the universal ribosomal protein uL5 family. Part of the 50S ribosomal subunit; part of the 5S rRNA/L5/L18/L25 subcomplex. Contacts the 5S rRNA and the P site tRNA. Forms a bridge to the 30S subunit in the 70S ribosome.

In terms of biological role, this is one of the proteins that bind and probably mediate the attachment of the 5S RNA into the large ribosomal subunit, where it forms part of the central protuberance. In the 70S ribosome it contacts protein S13 of the 30S subunit (bridge B1b), connecting the 2 subunits; this bridge is implicated in subunit movement. Contacts the P site tRNA; the 5S rRNA and some of its associated proteins might help stabilize positioning of ribosome-bound tRNAs. The protein is Large ribosomal subunit protein uL5 of Kineococcus radiotolerans (strain ATCC BAA-149 / DSM 14245 / SRS30216).